Here is a 346-residue protein sequence, read N- to C-terminus: 3',5'-cyclic-nucleotide phosphodiesterase (346 aa).

The protein belongs to the cyclic nucleotide phosphodiesterase class-II family.

It catalyses the reaction a nucleoside 3',5'-cyclic phosphate + H2O = a nucleoside 5'-phosphate + H(+). This chain is 3',5'-cyclic-nucleotide phosphodiesterase (cgs2), found in Schizosaccharomyces pombe (strain 972 / ATCC 24843) (Fission yeast).